A 366-amino-acid polypeptide reads, in one-letter code: Endogenous Bornavirus-like nucleoprotein 1 (366 aa).

Positions 1 to 15 (MSRPRNNPQTSSPQD) are enriched in polar residues. A disordered region spans residues 1–22 (MSRPRNNPQTSSPQDSTKDGSS).

As to expression, expression detected by RT-PCR in a few cell lines, including OL, HEK293T and MOLT-4. Not observed in HeLa cells.

In terms of biological role, may act as an RNA-binding protein. Highly homologous to the bornavirus nucleocapsid N protein that binds viral RNA and oligomerizes. The protein is Endogenous Bornavirus-like nucleoprotein 1 (EBLN1) of Homo sapiens (Human).